The chain runs to 383 residues: Pentatricopeptide repeat-containing protein 2, mitochondrial (383 aa).

The PPR repeat unit spans residues 161-195 (TSFNILMDMLFIKGKYKSALEVLIEMKNQNVKFTT). Position 377 is a phosphoserine (Ser377).

It belongs to the PTCD2 family.

The protein resides in the mitochondrion. Functionally, involved in mitochondrial RNA maturation and mitochondrial respiratory chain function. This is Pentatricopeptide repeat-containing protein 2, mitochondrial (PTCD2) from Pongo abelii (Sumatran orangutan).